Here is an 88-residue protein sequence, read N- to C-terminus: Cell division topological specificity factor (88 aa).

Belongs to the MinE family.

Its function is as follows. Prevents the cell division inhibition by proteins MinC and MinD at internal division sites while permitting inhibition at polar sites. This ensures cell division at the proper site by restricting the formation of a division septum at the midpoint of the long axis of the cell. This chain is Cell division topological specificity factor, found in Clostridium botulinum (strain Alaska E43 / Type E3).